Consider the following 692-residue polypeptide: MRACAGSTREAGSGAQDLSTLLCLEESMEEQDEKPPEPPKVCAQDSFLPQEIIIKVEGEDTGSLTIPSQEGVNFKIVTVDFTREEQGTCNPAQRTLDRDVILENHRDLVSWDLATAVGKKDSTSKQRIFDEEPANGVKIERFTRDDPWLSSCEEVDDCKDQLEKQQEKQEILLQEVAFTQRKAVIHERVCKSDETGEKSGLNSSLFSSPVIPIRNHFHKHVSHAKKWHLNAAVNSHQKINENETLYENNECGKPPQSIHLIQFTRTQTKDKSYGFSDRIQSFCHGTPLHIHEKIHGGGKTFDFKECGQVLNPKISHNEQQRIPFEESQYKCSETSHSSSLTQNMRNNSEEKPFECNQCGKSFSWSSHLVAHQRTHTGEKPYECSECGKSFSRSSHLVSHQRTHTGEKPYRCNQCGKSFSQSYVLVVHQRTHTGEKPYECNQCGKSFRQSYKLIAHQRTHTGEKPYECNQCGKSFIQSYKLIAHQRIHTGEKPYECNQCGKSFSQSYKLVAHQRTHTGEKPFECNQCGKSFSWSSQLVAHQRTHTGEKPYECSECGKSFNRSSHLVMHQRIHTGEKPYECNQCGKSFSQSYVLVVHQRTHTGEKPYECSQCGKSFRQSSCLTQHQRTHTGEKPFECNQCGKTFSLSARLIVHQRTHTGEKPFTCIQCGKAFINSYKLIRHQATHTEEKLYECN.

Residues 72–145 (VNFKIVTVDF…GVKIERFTRD (74 aa)) enclose the KRAB domain. Glycyl lysine isopeptide (Lys-Gly) (interchain with G-Cter in SUMO2) cross-links involve residues Lys138, Lys159, Lys168, Lys191, Lys198, Lys226, Lys304, Lys313, and Lys330. 12 C2H2-type zinc fingers span residues 353-375 (FECNQCGKSFSWSSHLVAHQRTH), 381-403 (YECSECGKSFSRSSHLVSHQRTH), 409-431 (YRCNQCGKSFSQSYVLVVHQRTH), 437-459 (YECNQCGKSFRQSYKLIAHQRTH), 465-487 (YECNQCGKSFIQSYKLIAHQRIH), 493-515 (YECNQCGKSFSQSYKLVAHQRTH), 521-543 (FECNQCGKSFSWSSQLVAHQRTH), 549-571 (YECSECGKSFNRSSHLVMHQRIH), 577-599 (YECNQCGKSFSQSYVLVVHQRTH), 605-627 (YECSQCGKSFRQSSCLTQHQRTH), 633-655 (FECNQCGKTFSLSARLIVHQRTH), and 661-683 (FTCIQCGKAFINSYKLIRHQATH).

The protein belongs to the krueppel C2H2-type zinc-finger protein family.

It localises to the nucleus. In terms of biological role, may be involved in transcriptional regulation. This is Zinc finger protein 180 (ZNF180) from Homo sapiens (Human).